The sequence spans 2096 residues: HEAT repeat-containing protein 1 homolog (2096 aa).

Residues 2058–2096 form an HEAT repeat; it reads TVPFIAELLEDEHQRVEKNTRTGVQELETILGESVQKYL.

Belongs to the HEATR1/UTP10 family. Part of the small subunit (SSU) processome, composed of more than 70 proteins and the RNA chaperone small nucleolar RNA (snoRNA) U3. Interacts with MYC; the interaction is required for localization of MYC to the nucleolus.

The protein localises to the nucleus. The protein resides in the nucleolus. Ribosome biogenesis factor; required for recruitment of Myc to nucleoli. Involved in nucleolar processing of pre-18S ribosomal RNA. Required for optimal pre-ribosomal RNA transcription by RNA polymerase I. Part of the small subunit (SSU) processome, first precursor of the small eukaryotic ribosomal subunit. During the assembly of the SSU processome in the nucleolus, many ribosome biogenesis factors, an RNA chaperone and ribosomal proteins associate with the nascent pre-rRNA and work in concert to generate RNA folding, modifications, rearrangements and cleavage as well as targeted degradation of pre-ribosomal RNA by the RNA exosome. Involved in neuronal-lineage cell proliferation during larval development. The polypeptide is HEAT repeat-containing protein 1 homolog (Drosophila melanogaster (Fruit fly)).